Reading from the N-terminus, the 453-residue chain is Aspartate aminotransferase, chloroplastic (453 aa).

The N-terminal 44 residues, 1–44 (MASLMLSLGSTSLLPREINKDKLKLGTSASNPFLKAKSFSRVTM), are a transit peptide targeting the chloroplast. L-aspartate contacts are provided by glycine 85, tryptophan 181, and asparagine 234. Residue lysine 298 is modified to N6-(pyridoxal phosphate)lysine. L-aspartate is bound at residue arginine 427.

Belongs to the class-I pyridoxal-phosphate-dependent aminotransferase family. Homodimer. The cofactor is pyridoxal 5'-phosphate.

It is found in the plastid. The protein resides in the chloroplast. The protein localises to the amyloplast. The catalysed reaction is L-aspartate + 2-oxoglutarate = oxaloacetate + L-glutamate. Amino acid aminotransferase important for the metabolism of amino acids and Krebs-cycle related organic acids. No activity with D-Asp or D-Ala as amino donors. In plants, it is involved in nitrogen metabolism and in aspects of carbon and energy metabolism. In Arabidopsis thaliana (Mouse-ear cress), this protein is Aspartate aminotransferase, chloroplastic (ASP5).